The primary structure comprises 378 residues: Lipid-A-disaccharide synthase (378 aa).

It belongs to the LpxB family.

The enzyme catalyses a lipid X + a UDP-2-N,3-O-bis[(3R)-3-hydroxyacyl]-alpha-D-glucosamine = a lipid A disaccharide + UDP + H(+). It functions in the pathway bacterial outer membrane biogenesis; LPS lipid A biosynthesis. Its function is as follows. Condensation of UDP-2,3-diacylglucosamine and 2,3-diacylglucosamine-1-phosphate to form lipid A disaccharide, a precursor of lipid A, a phosphorylated glycolipid that anchors the lipopolysaccharide to the outer membrane of the cell. The protein is Lipid-A-disaccharide synthase of Pseudomonas paraeruginosa (strain DSM 24068 / PA7) (Pseudomonas aeruginosa (strain PA7)).